The primary structure comprises 150 residues: Urease accessory protein UreE (150 aa).

This sequence belongs to the UreE family.

It is found in the cytoplasm. Involved in urease metallocenter assembly. Binds nickel. Probably functions as a nickel donor during metallocenter assembly. The chain is Urease accessory protein UreE from Staphylococcus aureus (strain Mu3 / ATCC 700698).